A 312-amino-acid chain; its full sequence is Ribose-phosphate pyrophosphokinase (312 aa).

Residues 38–40 (DGE) and 97–98 (RQ) contribute to the ATP site. 2 residues coordinate Mg(2+): His131 and Asp170. Lys193 is a catalytic residue. Residues Arg195, Asp219, and 223–227 (DTAGT) each bind D-ribose 5-phosphate.

It belongs to the ribose-phosphate pyrophosphokinase family. Class I subfamily. As to quaternary structure, homohexamer. The cofactor is Mg(2+).

The protein resides in the cytoplasm. It catalyses the reaction D-ribose 5-phosphate + ATP = 5-phospho-alpha-D-ribose 1-diphosphate + AMP + H(+). Its pathway is metabolic intermediate biosynthesis; 5-phospho-alpha-D-ribose 1-diphosphate biosynthesis; 5-phospho-alpha-D-ribose 1-diphosphate from D-ribose 5-phosphate (route I): step 1/1. Its function is as follows. Involved in the biosynthesis of the central metabolite phospho-alpha-D-ribosyl-1-pyrophosphate (PRPP) via the transfer of pyrophosphoryl group from ATP to 1-hydroxyl of ribose-5-phosphate (Rib-5-P). The polypeptide is Ribose-phosphate pyrophosphokinase (Leptospira interrogans serogroup Icterohaemorrhagiae serovar copenhageni (strain Fiocruz L1-130)).